The chain runs to 273 residues: Bis(5'-nucleosyl)-tetraphosphatase, symmetrical (273 aa).

Belongs to the Ap4A hydrolase family.

It carries out the reaction P(1),P(4)-bis(5'-adenosyl) tetraphosphate + H2O = 2 ADP + 2 H(+). Hydrolyzes diadenosine 5',5'''-P1,P4-tetraphosphate to yield ADP. This is Bis(5'-nucleosyl)-tetraphosphatase, symmetrical from Proteus mirabilis (strain HI4320).